Here is a 440-residue protein sequence, read N- to C-terminus: C4-dicarboxylate transport protein (440 aa).

The next 8 helical transmembrane spans lie at 8-28, 40-60, 74-94, 147-167, 187-207, 221-241, 288-308, and 354-374; these read LYLQVLLAVVLGALVGHLFPA, FIKLVKMLIAPIVFATVVTGI, LKGLLYFEVLTTVALAIGLVV, GDILQVLLFSVLFGAALAALK, IVGFVMRLAPVGAFGAMAFTV, LIACFYATSALFVVLMLGLVL, VVGLVVPMGYSFNLDGTSIYL, and AATLSAVGNIPVAGLALLLGV. Positions 419-440 are disordered; it reads EEVEPANEPEPPAVPAGAGLHG.

The protein belongs to the dicarboxylate/amino acid:cation symporter (DAACS) (TC 2.A.23) family.

The protein localises to the cell inner membrane. Its function is as follows. Responsible for the transport of dicarboxylates such as succinate, fumarate, and malate from the periplasm across the membrane. The chain is C4-dicarboxylate transport protein from Anaeromyxobacter dehalogenans (strain 2CP-1 / ATCC BAA-258).